The sequence spans 315 residues: Glutaminase (315 aa).

Serine 70, asparagine 120, glutamate 166, asparagine 173, tyrosine 197, tyrosine 249, and valine 267 together coordinate substrate.

This sequence belongs to the glutaminase family. Homotetramer.

It carries out the reaction L-glutamine + H2O = L-glutamate + NH4(+). In Sinorhizobium fredii (strain NBRC 101917 / NGR234), this protein is Glutaminase.